The primary structure comprises 1893 residues: MNFKGVKLLKNSKKRLDFLPNTLNKYSIRKFTVGTASILVGATLFLGVSNEAEAAEKIDSPTKEKVATTEEAATKEEAATTEEPATKEEAATTEEPATKEEAAIAEEPATKEEAATTEEPATKEEAAIAEEPATKEEAATTEEPATKEEAATTEEPATKEEAAIAEEPATKEEAATTEEPATKEEAAIAEEPATKEEAVTSEEAATKEKAAIAEEPATKEEAAIAEEPETKEEAATTEEPATKEEAAIAEEAATKEKAVTSEEAATKEKAAIAEEAATKEKAAIAEEPETKEEAATTEEPETKEEAAIAEEPATKEKAVTSEEAHGINNKNKQLLDMDKNSTIDEKFDYAKQAINELNINQKDISNIEASIKNNSDLKNLSKEELNNEILRAALVNESNNNDYGLQTLSAIEPLTTNVRNKNNSLSPVSRLKMLATATSGQNVNDKINITNASLTLNQKNNQHDDNTVWPTSNEQLRLSADYELDNSIKEGDTFTIKYGDYIRPGALELPAKNTQLRSKEGSIVANGVYDENTTTTTYTFTNYVDQYQNITGSFNLLATPKRETVTTDKQTYPMNVTIANQEVSENFVVDYGNHEDHLTNAAVVNVDNVNNQHNEVVYLNQSGDRIYDAKYFSIVQNGTFIPNEVKVYEVLDDNVLVDSFNPDLNGPAVKDVTSEFTPQYSLNNTRVDIDLNRSNMNKGSRYIITQAVKPSGTGNVNTTYELTRYGNEASRYPTGTKSTTVSYINGSSTAQGDNPTYNLGDYVWLDKNKDGIQNDDEKGISGVYVILKDSNNKELQRATTDDTGRYQFNNLQNGTYNVEFVIPNNYTPSPSNTIDNDTIDSDGQKDGDSNVVVAKGTINNADNMTVDTGFYETPKYSLGDYVWKDTNKDGVQDSDEKGIQGVTVTLKDKNGNVLKTTTTDENGSYRFDNLDSGDYIVHFEKPEGLTQTTTNSDSDENKDADGEEVHVTITDHDDFSIDNGYFDEDSDADADSDADADSDADADADADSDADADADADSDADSDADADADSDADADADADADSDSDADADADADADSDADADADSDADADADADSDADADADSDADSDADADADSDADADADADADSDADADSDADADADADADSDADADADADSDADADSDSDADADADADSDADADADADSDADADADSDADADADSDADADADSDADSDADADADSDADADADADADSDADADADSDADADADADADSDADSDADSDADSDADADADSDADADADADADSDADADSDADADSDADADADADADSDADADSDADADSDADADSDADADADADSDADADADADSDADADADSDSDADADADADSDADADADADSDADADSDADADSDADADADADSDADADSDADADADADSDADADADSDADADADADSDADADSDADADADADADSDADADADADSDADADADADADADSDADADADSDADADADSDADSDADADADSDADADADADSDADADSDADADSDADADSDADADADADSDADADSDADADSDADADADADSDADADSDADADADSDADADADSDADADSDADADADADADSDADADSDADSDADADADSDSDADADADADSDADADADADSDADADSDADADADSDSDADADADADSDADADSDADADADADSDADADADSDADADADSDADADADSDADSDADADADSDADADADADSDADADSDADADADADSDADADSDADADADADSDADADSDADADSDADADSDADADSDADADSDADADADADSDADADSDADADADADSDADADADSDADADADSDADADADSDADADADSDADADADSDADKYHNDTADKSNDNELPDTGNNTQNNGTLFGSLFAALGGLFLVGSRRKNKNNEEK.

The first 54 residues, 1–54, serve as a signal peptide directing secretion; the sequence is MNFKGVKLLKNSKKRLDFLPNTLNKYSIRKFTVGTASILVGATLFLGVSNEAEA. The tract at residues 53 to 333 is disordered; sequence EAAEKIDSPT…AHGINNKNKQ (281 aa). Basic and acidic residues predominate over residues 54–222; the sequence is AAEKIDSPTK…AEEPATKEEA (169 aa). Tandem repeats lie at residues 72-83, 84-95, 96-107, 108-119, 120-131, 132-143, 144-155, 156-167, 168-179, 180-191, 192-203, 204-215, 216-227, 228-239, 240-251, 252-263, 264-275, 276-287, 288-299, 300-311, and 312-323. A 21 X 12 AA tandem repeat of [AP]-[AE]-T-K-E-[EK]-A-[AV]-[IT]-[AST]-E-E region spans residues 72–323; it reads AATKEEAATT…TKEKAVTSEE (252 aa). The segment covering 240–284 has biased composition (basic and acidic residues); the sequence is PATKEEAAIAEEAATKEKAVTSEEAATKEKAAIAEEAATKEKAAI. Over residues 286-302 the composition is skewed to acidic residues; the sequence is EEPETKEEAATTEEPET. Over residues 312–325 the composition is skewed to basic and acidic residues; sequence PATKEKAVTSEEAH. The segment at 324–755 is ligand binding A region; it reads AHGINNKNKQ…GSSTAQGDNP (432 aa). CNA-B domains lie at 756–874 and 875–984; these read TYNL…YETP and KYSL…YFDE. The tract at residues 941–1867 is disordered; it reads KPEGLTQTTT…GNNTQNNGTL (927 aa). Residues 955 to 975 show a composition bias toward basic and acidic residues; it reads DENKDADGEEVHVTITDHDDF. The segment covering 981 to 1836 has biased composition (acidic residues); that stretch reads YFDEDSDADA…DSDADADADS (856 aa). Residues 1837–1851 are compositionally biased toward basic and acidic residues; sequence DADKYHNDTADKSND. An LPXTG sorting signal motif is present at residues 1854 to 1858; the sequence is LPDTG. The residue at position 1857 (T1857) is a Pentaglycyl murein peptidoglycan amidated threonine. A propeptide spans 1858 to 1893 (removed by sortase); that stretch reads GNNTQNNGTLFGSLFAALGGLFLVGSRRKNKNNEEK.

It belongs to the serine-aspartate repeat-containing protein (SDr) family.

Its subcellular location is the secreted. The protein localises to the cell wall. Functionally, responsible for collagen binding by S.saprophyticus. In Staphylococcus saprophyticus, this protein is Serine-aspartate repeat-containing protein I (sdrI).